The chain runs to 398 residues: MSPLLPSFPPAVLALADGSIFPGYSIGAPGETTGEVVFNTALTGYQEIITDPSYSRQIVTLTYPHIGNVGVNAQDAESDRIHAAGLVVKDLPKRVSSFRSEGALDDYLTKAGVLGIAGIDTRKLTRILRDKGAQSGAIVAGKVGDSYETLVSKALELAKAFPGMSGLDLAKVVTTQKVYEWREAEWNLHGADGKPAYGTLDTGKPINKVVAYDFGVKRNILRMLTERGCQLTVVPAQTTAAEVLAMNPDGVFFSNGPGDPGPCDYAIAAAKEIIEKGVPTFGICLGHQIMGLAAGAKTLKMKFGHHGANHPVKDLDTGRVAITSQNHGFAVDANTLPDNIRVTHVSLFDGSLQGLAWKDKPELCFQGHPEASPGPHDIAYLFDRFVELMNAASKKEGE.

Residues 1 to 204 (MSPLLPSFPP…PAYGTLDTGK (204 aa)) are CPSase. 3 residues coordinate L-glutamine: Ser-53, Gly-256, and Gly-258. Residues 208–395 (KVVAYDFGVK…VELMNAASKK (188 aa)) enclose the Glutamine amidotransferase type-1 domain. The active-site Nucleophile is Cys-284. L-glutamine contacts are provided by Leu-285, Gln-288, Asn-326, Gly-328, and Phe-329. Catalysis depends on residues His-368 and Glu-370.

The protein belongs to the CarA family. In terms of assembly, composed of two chains; the small (or glutamine) chain promotes the hydrolysis of glutamine to ammonia, which is used by the large (or ammonia) chain to synthesize carbamoyl phosphate. Tetramer of heterodimers (alpha,beta)4.

The enzyme catalyses hydrogencarbonate + L-glutamine + 2 ATP + H2O = carbamoyl phosphate + L-glutamate + 2 ADP + phosphate + 2 H(+). The catalysed reaction is L-glutamine + H2O = L-glutamate + NH4(+). It functions in the pathway amino-acid biosynthesis; L-arginine biosynthesis; carbamoyl phosphate from bicarbonate: step 1/1. It participates in pyrimidine metabolism; UMP biosynthesis via de novo pathway; (S)-dihydroorotate from bicarbonate: step 1/3. In terms of biological role, small subunit of the glutamine-dependent carbamoyl phosphate synthetase (CPSase). CPSase catalyzes the formation of carbamoyl phosphate from the ammonia moiety of glutamine, carbonate, and phosphate donated by ATP, constituting the first step of 2 biosynthetic pathways, one leading to arginine and/or urea and the other to pyrimidine nucleotides. The small subunit (glutamine amidotransferase) binds and cleaves glutamine to supply the large subunit with the substrate ammonia. The protein is Carbamoyl phosphate synthase small chain of Polynucleobacter necessarius subsp. necessarius (strain STIR1).